Reading from the N-terminus, the 971-residue chain is Isoleucine--tRNA ligase (971 aa).

Positions 60-70 match the 'HIGH' region motif; the sequence is PYANGDLHIGH. Position 563 (glutamate 563) interacts with L-isoleucyl-5'-AMP. Positions 604-608 match the 'KMSKS' region motif; that stretch reads KMSKS. Lysine 607 lines the ATP pocket. The Zn(2+) site is built by cysteine 922, cysteine 925, cysteine 942, and cysteine 945.

Belongs to the class-I aminoacyl-tRNA synthetase family. IleS type 1 subfamily. Monomer. Requires Zn(2+) as cofactor.

It is found in the cytoplasm. It carries out the reaction tRNA(Ile) + L-isoleucine + ATP = L-isoleucyl-tRNA(Ile) + AMP + diphosphate. Its function is as follows. Catalyzes the attachment of isoleucine to tRNA(Ile). As IleRS can inadvertently accommodate and process structurally similar amino acids such as valine, to avoid such errors it has two additional distinct tRNA(Ile)-dependent editing activities. One activity is designated as 'pretransfer' editing and involves the hydrolysis of activated Val-AMP. The other activity is designated 'posttransfer' editing and involves deacylation of mischarged Val-tRNA(Ile). The sequence is that of Isoleucine--tRNA ligase from Acaryochloris marina (strain MBIC 11017).